A 68-amino-acid polypeptide reads, in one-letter code: DNA-directed RNA polymerase subunit omega (68 aa).

It belongs to the RNA polymerase subunit omega family. As to quaternary structure, the RNAP catalytic core consists of 2 alpha, 1 beta, 1 beta' and 1 omega subunit. When a sigma factor is associated with the core the holoenzyme is formed, which can initiate transcription.

It carries out the reaction RNA(n) + a ribonucleoside 5'-triphosphate = RNA(n+1) + diphosphate. Functionally, promotes RNA polymerase assembly. Latches the N- and C-terminal regions of the beta' subunit thereby facilitating its interaction with the beta and alpha subunits. This Ruminiclostridium cellulolyticum (strain ATCC 35319 / DSM 5812 / JCM 6584 / H10) (Clostridium cellulolyticum) protein is DNA-directed RNA polymerase subunit omega.